Consider the following 354-residue polypeptide: UDP-N-acetylglucosamine--N-acetylmuramyl-(pentapeptide) pyrophosphoryl-undecaprenol N-acetylglucosamine transferase (354 aa).

UDP-N-acetyl-alpha-D-glucosamine is bound by residues 15–17 (TGG), N127, R163, S191, I244, 263–268 (ALTVSE), and Q288.

The protein belongs to the glycosyltransferase 28 family. MurG subfamily.

The protein localises to the cell inner membrane. It catalyses the reaction di-trans,octa-cis-undecaprenyl diphospho-N-acetyl-alpha-D-muramoyl-L-alanyl-D-glutamyl-meso-2,6-diaminopimeloyl-D-alanyl-D-alanine + UDP-N-acetyl-alpha-D-glucosamine = di-trans,octa-cis-undecaprenyl diphospho-[N-acetyl-alpha-D-glucosaminyl-(1-&gt;4)]-N-acetyl-alpha-D-muramoyl-L-alanyl-D-glutamyl-meso-2,6-diaminopimeloyl-D-alanyl-D-alanine + UDP + H(+). Its pathway is cell wall biogenesis; peptidoglycan biosynthesis. Cell wall formation. Catalyzes the transfer of a GlcNAc subunit on undecaprenyl-pyrophosphoryl-MurNAc-pentapeptide (lipid intermediate I) to form undecaprenyl-pyrophosphoryl-MurNAc-(pentapeptide)GlcNAc (lipid intermediate II). The sequence is that of UDP-N-acetylglucosamine--N-acetylmuramyl-(pentapeptide) pyrophosphoryl-undecaprenol N-acetylglucosamine transferase from Vibrio cholerae serotype O1 (strain ATCC 39315 / El Tor Inaba N16961).